Consider the following 628-residue polypeptide: LRR receptor kinase SERK2 (628 aa).

The N-terminal stretch at 1–31 is a signal peptide; that stretch reads MAEARLLRRRRLCLAVPFVWVVAVAVSRVGA. LRR repeat units follow at residues 97–121, 123–144, 145–169, and 170–194; these read LKNL…LGNL, NLVS…TLGQ, LYKL…LTNI, and TTLQ…SFSL. N-linked (GlcNAc...) asparagine glycans are attached at residues N109, N120, N133, N155, N168, and N181. Residues 243–263 traverse the membrane as a helical segment; it reads AIAGGVAAAAALLFAVPAIGF. Residue T303 is modified to Phosphothreonine. A Protein kinase domain is found at 306–593; the sequence is FSNKNILGRG…GLAERWEEWQ (288 aa). 312 to 320 contributes to the ATP binding site; the sequence is LGRGGFGKV. S329 carries the post-translational modification Phosphoserine. An ATP-binding site is contributed by K334. At T350 the chain carries Phosphothreonine. 2 positions are modified to phosphoserine: S356 and S387. D433 (proton acceptor) is an active-site residue. Residues T463, T466, and T472 each carry the phosphothreonine modification. The residue at position 615 (S615) is a Phosphoserine. Residue T616 is modified to Phosphothreonine. Position 625 is a phosphoserine (S625).

The protein belongs to the protein kinase superfamily. Ser/Thr protein kinase family. Interacts with BRI1. Interacts with XA21, XA26/XA3 and FLS2. Post-translationally, autophosphorylated on serine and threonine residues. Expressed in flag leaves. Expressed in roots, shoot apex, leaf blades, leaf sheaths, panicles and flowers. Expressed leaves, stems, sheaths and flowers.

Its subcellular location is the cell membrane. It carries out the reaction L-seryl-[protein] + ATP = O-phospho-L-seryl-[protein] + ADP + H(+). The catalysed reaction is L-threonyl-[protein] + ATP = O-phospho-L-threonyl-[protein] + ADP + H(+). Functionally, LRR receptor kinase involved in positive regulation of somatic embryogenesis and defense response against the rice blast fungus pathogen Magnaporthe oryzae. Involved in the positive regulation of receptor kinase-mediated immunity. Required for immunity mediated by the LRR receptor kinases XA21 and XA26/XA3 which recognize effectors from the bacterial pathogen Xanthomonas oryzae pv. oryzae (Xoo). Required for the immune response mediated by the LRR receptor kinase FLS2 which recognizes specifically the bacterial flagellin (flg22) effector. Kinase activity and direct interaction with the immune receptors is critical for their function. Involved in the regulation of plant growth through the brassinosteroid (BR) signaling pathway. This is LRR receptor kinase SERK2 from Oryza sativa subsp. japonica (Rice).